Here is a 313-residue protein sequence, read N- to C-terminus: Protein-glutamine deamidase Cif (313 aa).

Active-site residues include Cys-128, His-186, and Gln-205.

This sequence belongs to the Cif family.

The protein resides in the secreted. Its subcellular location is the host nucleus. It catalyses the reaction L-glutaminyl-[protein] + H2O = L-glutamyl-[protein] + NH4(+). Protein-glutamine deamidase effector that inhibits the host cell cycle and other key cellular processes such as the actin network and programmed-cell death. Acts by mediating the side chain deamidation of 'Gln-40' of host NEDD8, converting it to glutamate, thereby abolishing the activity of cullin-RING-based E3 ubiquitin-protein ligase complexes (CRL complexes). Inactivation of CRL complexes prevents ubiquitination and subsequent degradation of the cyclin-dependent kinase inhibitors CDKN1A/p21 and CDKN1B/p27, leading to G1 and G2 cell cycle arrests in host cells. Deamidation of 'Gln-40' of host NEDD8 also triggers macrophage-specific programmed cell death. Also able to catalyze deamidation of 'Gln-40' of host ubiquitin in vitro; however, NEDD8 constitutes the preferred substrate in vivo. The protein is Protein-glutamine deamidase Cif of Photorhabdus laumondii subsp. laumondii (strain DSM 15139 / CIP 105565 / TT01) (Photorhabdus luminescens subsp. laumondii).